Consider the following 88-residue polypeptide: Large ribosomal subunit protein bL27 (88 aa).

The tract at residues 1 to 23 is disordered; the sequence is MAHKKGTGSTRNGRDSNAQRLGV. Residues 7 to 19 show a composition bias toward polar residues; the sequence is TGSTRNGRDSNAQ.

The protein belongs to the bacterial ribosomal protein bL27 family.

This is Large ribosomal subunit protein bL27 (rpmA) from Synechococcus elongatus (strain ATCC 33912 / PCC 7942 / FACHB-805) (Anacystis nidulans R2).